Here is a 469-residue protein sequence, read N- to C-terminus: Cytochrome P450 85A1 (469 aa).

Residues Met1–Leu21 traverse the membrane as a helical segment. Cys419 is a heme binding site.

Belongs to the cytochrome P450 family. It depends on heme as a cofactor. As to expression, expressed at low levels in all the tissues, but preferentially in the leaf sheath.

The protein localises to the membrane. It catalyses the reaction 6-deoxoteasterone + reduced [NADPH--hemoprotein reductase] + O2 = 6alpha-hydroxyteasterone + oxidized [NADPH--hemoprotein reductase] + H2O + H(+). The catalysed reaction is 6alpha-hydroxytyphasterol + reduced [NADPH--hemoprotein reductase] + O2 = teasterone + oxidized [NADPH--hemoprotein reductase] + 2 H2O + H(+). The enzyme catalyses 3-dehydro-6-deoxoteasterone + reduced [NADPH--hemoprotein reductase] + O2 = 3-dehydro-6alpha-hydroxyteasterone + oxidized [NADPH--hemoprotein reductase] + H2O + H(+). It carries out the reaction 3-dehydro-6alpha-hydroxyteasterone + reduced [NADPH--hemoprotein reductase] + O2 = 3-dehydroteasterone + oxidized [NADPH--hemoprotein reductase] + 2 H2O + H(+). It catalyses the reaction 6-deoxotyphasterol + reduced [NADPH--hemoprotein reductase] + O2 = 6alpha-hydroxytyphasterol + oxidized [NADPH--hemoprotein reductase] + H2O + H(+). The catalysed reaction is 6alpha-hydroxytyphasterol + reduced [NADPH--hemoprotein reductase] + O2 = typhasterol + oxidized [NADPH--hemoprotein reductase] + 2 H2O + H(+). The enzyme catalyses 3-dehydro-6-deoxoteasterone + 2 reduced [NADPH--hemoprotein reductase] + 2 O2 = 3-dehydroteasterone + 2 oxidized [NADPH--hemoprotein reductase] + 3 H2O + 2 H(+). It carries out the reaction 6-deoxoteasterone + 2 reduced [NADPH--hemoprotein reductase] + 2 O2 = teasterone + 2 oxidized [NADPH--hemoprotein reductase] + 3 H2O + 2 H(+). It catalyses the reaction 6-deoxotyphasterol + 2 reduced [NADPH--hemoprotein reductase] + 2 O2 = typhasterol + 2 oxidized [NADPH--hemoprotein reductase] + 3 H2O + 2 H(+). It participates in plant hormone biosynthesis; brassinosteroid biosynthesis. Its function is as follows. Catalyzes the C6-oxidation step in brassinosteroids biosynthesis. May convert 6-deoxoteasterone (6-deoxoTE) to teasterone (TE), 3-dehydro-6-deoxoteasterone (6-deoxo3DT, 6-deoxo3DHT) to 3-dehydroteasterone (3DT, 3-DHT), and 6-deoxotyphasterol (6-deoxoTY) to typhasterol (TY). Involved in the organization and elongation of the leaf and stem cells. Not able to convert 6-deoxocastasterone (6-deoxoCS) and castasterone (CS) to brassinolide (BL). The sequence is that of Cytochrome P450 85A1 from Oryza sativa subsp. japonica (Rice).